The following is a 437-amino-acid chain: GTPase Obg (437 aa).

One can recognise an Obg domain in the interval 2-160 (SMFLDTAKIK…RNLELELKVL (159 aa)). Residues 161–338 (ADVGLVGFPS…LLEATAELLE (178 aa)) form the OBG-type G domain. GTP is bound by residues 167–174 (GFPSVGKS), 192–196 (FTTIV), 214–217 (DLPG), 284–287 (NKMD), and 319–321 (SGI). Residues Ser-174 and Thr-194 each contribute to the Mg(2+) site. Positions 359–437 (GFNPDEPEFA…IGKFEFEFVD (79 aa)) constitute an OCT domain.

The protein belongs to the TRAFAC class OBG-HflX-like GTPase superfamily. OBG GTPase family. Monomer. The cofactor is Mg(2+).

The protein localises to the cytoplasm. Functionally, an essential GTPase which binds GTP, GDP and possibly (p)ppGpp with moderate affinity, with high nucleotide exchange rates and a fairly low GTP hydrolysis rate. Plays a role in control of the cell cycle, stress response, ribosome biogenesis and in those bacteria that undergo differentiation, in morphogenesis control. The polypeptide is GTPase Obg (Streptococcus suis (strain 05ZYH33)).